We begin with the raw amino-acid sequence, 628 residues long: MDLWQLLLTLAVVGSSNAFVGREAVTVTLNRANLSLQRVNASLETNSSGNPKFTKCRSPELETFSCHWTDEGHHGLKSTGFIQMFYTKRNSQEQNQEWKECPDYVSAGENSCYFNSSYTSIWKPYCVKLTSNGGKVDEKCFYVEEIVQPDPPTGLNWTLMNTSATAIYGDIQVRWKPPRSADVKKGWIMLDYELQIKQTNETQWKMMDPVTSTSVPLYSLRLDKEYEVRIRSRLQNSDKYGEFSEILYITLPQSSPFTCEEEFQFPWFLIMIFGIFGLTVMLLVVMFSKQQRIKMLILPPVPVPKIKGVDPDLLKEGKLEEVNTILAIHDNSKPQFYNDDSWVEFIELDIDDSDEKIEGSDTDRLLSSDHQKSLNILGAKDGDSGRTSCYEPDILEADFNANDGTSEDVQPDKLKEEADLLCLDEKNQNNSPCDAPPDPQQALVIPPEEEKPQPLLIGKTESTNQDAPNQISNPISLANMDFYAQVSDITPAGSVVLSPGQKNKAGLSQCEAHPEANFVKDNACFFKGDAKNPDVMTPHIEVKSHEEPSFKQEDPYITTESLTTAAEKSGPPEQSPSSEMALPDYTSIHIVQSPQGLILNAAALPLPDKEFLSSCGYVSTDQLNKIML.

The first 18 residues, 1 to 18, serve as a signal peptide directing secretion; that stretch reads MDLWQLLLTLAVVGSSNA. The Extracellular segment spans residues 19-266; sequence FVGREAVTVT…FTCEEEFQFP (248 aa). Residues Asn-33, Asn-40, and Asn-46 are each glycosylated (N-linked (GlcNAc...) asparagine). 2 disulfides stabilise this stretch: Cys-56–Cys-66 and Cys-101–Cys-112. Asn-115 carries an N-linked (GlcNAc...) asparagine glycan. Cysteines 126 and 140 form a disulfide. The Fibronectin type-III domain occupies 151–254; it reads PPTGLNWTLM…EILYITLPQS (104 aa). N-linked (GlcNAc...) asparagine glycans are attached at residues Asn-156, Asn-161, and Asn-200. The WSXWS motif motif lies at 240–244; the sequence is YGEFS. A helical transmembrane segment spans residues 267–287; that stretch reads WFLIMIFGIFGLTVMLLVVMF. Residues 288–628 are Cytoplasmic-facing; the sequence is SKQQRIKMLI…STDQLNKIML (341 aa). Positions 294-379 are required for JAK2 binding; that stretch reads KMLILPPVPV…HQKSLNILGA (86 aa). The Box 1 motif motif lies at 297-305; sequence ILPPVPVPK. The short motif at 340-349 is the UbE motif element; the sequence is DSWVEFIELD. A Phosphoserine modification is found at Ser-341. Phosphotyrosine occurs at positions 483 and 585.

Belongs to the type I cytokine receptor family. Type 1 subfamily. On growth hormone (GH) binding, forms homodimers and binds JAK2 via a box 1-containing domain. Post-translationally, the soluble form (GHBP) is produced by phorbol ester-promoted proteolytic cleavage at the cell surface (shedding) by ADAM17/TACE. Shedding is inhibited by growth hormone (GH) binding to the receptor probably due to a conformational change in GHR rendering the receptor inaccessible to ADAM17. On GH binding, phosphorylated on tyrosine residues in the cytoplasmic domain by JAK2. In terms of processing, ubiquitinated by the ECS(SOCS2) complex following ligand-binding and phosphorylation by JAK2, leading to its degradation by the proteasome. Regulation by the ECS(SOCS2) complex acts as a negative feedback loop of growth hormone receptor signaling. Ubiquitination is not sufficient for GHR internalization.

Its subcellular location is the cell membrane. It localises to the secreted. In terms of biological role, receptor for pituitary gland growth hormone (GH1) involved in regulating postnatal body growth. On ligand binding, couples to the JAK2/STAT5 pathway. The soluble form (GHBP) acts as a reservoir of growth hormone in plasma and may be a modulator/inhibitor of GH signaling. The protein is Growth hormone receptor (GHR) of Cavia porcellus (Guinea pig).